The sequence spans 202 residues: Translation initiation factor IF-3 (202 aa).

Residues 172–202 (KTRASARHPEVPGAGSVQDIDATGDTDGSPH) are disordered.

This sequence belongs to the IF-3 family. In terms of assembly, monomer.

The protein localises to the cytoplasm. In terms of biological role, IF-3 binds to the 30S ribosomal subunit and shifts the equilibrium between 70S ribosomes and their 50S and 30S subunits in favor of the free subunits, thus enhancing the availability of 30S subunits on which protein synthesis initiation begins. This chain is Translation initiation factor IF-3, found in Mycobacterium leprae (strain TN).